The chain runs to 283 residues: Light-independent protochlorophyllide reductase iron-sulfur ATP-binding protein (283 aa).

Residues 15–20 (GIGKST) and Lys-44 contribute to the ATP site. A Mg(2+)-binding site is contributed by Ser-19. Positions 100 and 134 each coordinate [4Fe-4S] cluster. 185–186 (NR) lines the ATP pocket.

Belongs to the NifH/BchL/ChlL family. In terms of assembly, homodimer. Protochlorophyllide reductase is composed of three subunits; ChlL, ChlN and ChlB. Requires [4Fe-4S] cluster as cofactor.

It catalyses the reaction chlorophyllide a + oxidized 2[4Fe-4S]-[ferredoxin] + 2 ADP + 2 phosphate = protochlorophyllide a + reduced 2[4Fe-4S]-[ferredoxin] + 2 ATP + 2 H2O. It participates in porphyrin-containing compound metabolism; chlorophyll biosynthesis (light-independent). In terms of biological role, component of the dark-operative protochlorophyllide reductase (DPOR) that uses Mg-ATP and reduced ferredoxin to reduce ring D of protochlorophyllide (Pchlide) to form chlorophyllide a (Chlide). This reaction is light-independent. The L component serves as a unique electron donor to the NB-component of the complex, and binds Mg-ATP. This chain is Light-independent protochlorophyllide reductase iron-sulfur ATP-binding protein, found in Synechococcus sp. (strain JA-3-3Ab) (Cyanobacteria bacterium Yellowstone A-Prime).